The chain runs to 234 residues: tRNA1(Val) (adenine(37)-N6)-methyltransferase (234 aa).

Belongs to the methyltransferase superfamily. tRNA (adenine-N(6)-)-methyltransferase family.

It localises to the cytoplasm. The catalysed reaction is adenosine(37) in tRNA1(Val) + S-adenosyl-L-methionine = N(6)-methyladenosine(37) in tRNA1(Val) + S-adenosyl-L-homocysteine + H(+). In terms of biological role, specifically methylates the adenine in position 37 of tRNA(1)(Val) (anticodon cmo5UAC). The protein is tRNA1(Val) (adenine(37)-N6)-methyltransferase of Aliivibrio fischeri (strain ATCC 700601 / ES114) (Vibrio fischeri).